A 218-amino-acid chain; its full sequence is ATP-dependent dethiobiotin synthetase BioD (218 aa).

9-15 (TNAGKTT) lines the ATP pocket. A Mg(2+)-binding site is contributed by Thr14. The active site involves Lys35. Phosphate is bound at residue Lys35. A substrate-binding site is contributed by Thr39. ATP is bound by residues Asp50, Glu116, and 116-119 (EGAG). Positions 50 and 116 each coordinate Mg(2+). 116–119 (EGAG) contributes to the phosphate binding site. 151-154 (GLIN) contributes to the substrate binding site. ATP-binding positions include Asn175 and 175-177 (NLK).

The protein belongs to the dethiobiotin synthetase family. In terms of assembly, homodimer. The cofactor is Mg(2+).

The protein localises to the cytoplasm. The catalysed reaction is (7R,8S)-7,8-diammoniononanoate + CO2 + ATP = (4R,5S)-dethiobiotin + ADP + phosphate + 3 H(+). Its pathway is cofactor biosynthesis; biotin biosynthesis; biotin from 7,8-diaminononanoate: step 1/2. In terms of biological role, catalyzes a mechanistically unusual reaction, the ATP-dependent insertion of CO2 between the N7 and N8 nitrogen atoms of 7,8-diaminopelargonic acid (DAPA, also called 7,8-diammoniononanoate) to form a ureido ring. The protein is ATP-dependent dethiobiotin synthetase BioD of Helicobacter pylori (strain ATCC 700392 / 26695) (Campylobacter pylori).